A 961-amino-acid chain; its full sequence is Thrombospondin-4 (961 aa).

Residues M1–G23 form the signal peptide. The 169-residue stretch at A24–G192 folds into the Laminin G-like domain. The EGF-like 1 domain maps to P286–S325. 21 cysteine pairs are disulfide-bonded: C290–C301, C295–C310, C313–C324, C330–C341, C335–C350, C353–C377, C383–C394, C388–C403, C406–C418, C424–C438, C432–C448, C450–C461, C477–C482, C487–C507, C523–C543, C546–C566, C582–C602, C605–C625, C643–C663, C683–C703, and C719–C940. An EGF-like 2; calcium-binding domain is found at D326 to Q363. The EGF-like 3; calcium-binding domain occupies D379–K419. In terms of domain architecture, EGF-like 4 spans M420–G462. TSP type-3 repeat units follow at residues K463–Q495, E496–Q531, R532–Q554, K555–Q590, E591–Q613, S614–Q651, L652–Q691, and E692–L727. Positions K562–D564 match the Cell attachment site motif. A disordered region spans residues N581–G671. N612 carries an N-linked (GlcNAc...) asparagine glycan. Positions T640–L652 are enriched in polar residues. Positions G660–G671 are enriched in acidic residues. A TSP C-terminal domain is found at R731–P945. N941 is a glycosylation site (N-linked (GlcNAc...) asparagine).

This sequence belongs to the thrombospondin family. In terms of assembly, homopentamer; disulfide-linked. Interacts with PTBP3. Interacts (via EGF-like 3; calcium-binding domain) with ATF6 and facilitates its processing, activation and nuclear translocation. Interacts with NOTCH1.

The protein localises to the endoplasmic reticulum. It is found in the sarcoplasmic reticulum. Its subcellular location is the secreted. It localises to the extracellular space. The protein resides in the extracellular matrix. In terms of biological role, adhesive glycoprotein that mediates cell-to-cell and cell-to-matrix interactions and is involved in various processes including cellular proliferation, migration, adhesion and attachment, inflammatory response to CNS injury, regulation of vascular inflammation and adaptive responses of the heart to pressure overload and in myocardial function and remodeling. Binds to structural extracellular matrix (ECM) proteins and modulates the ECM in response to tissue damage, contributing to cardioprotective and adaptive ECM remodeling. Plays a role in ER stress response, via its interaction with the activating transcription factor 6 alpha (ATF6) which produces adaptive ER stress response factors and protects myocardium from pressure overload. May contribute to spinal presynaptic hypersensitivity and neuropathic pain states after peripheral nerve injury. May play a role in regulating protective astrogenesis from the subventricular zone (SVZ) niche after injury in a NOTCH1-dependent manner. The sequence is that of Thrombospondin-4 (THBS4) from Bos taurus (Bovine).